We begin with the raw amino-acid sequence, 388 residues long: Staphopain A (388 aa).

The first 25 residues, 1–25 (MKRNFPKLIALSLIFSLSVTPIANA), serve as a signal peptide directing secretion. Positions 26–214 (ESNSNIKAKD…TSQFKSNNYT (189 aa)) are excised as a propeptide. Residues cysteine 238, histidine 334, and asparagine 355 contribute to the active site.

It belongs to the peptidase C47 family. In terms of assembly, in the cytoplasm, prematurely activated/folded ScpA forms a stable non-covalent complex with ScpB. Cleavage leads to the activation of ScpA probably by an auto-catalytic manner.

The protein localises to the secreted. It catalyses the reaction Broad endopeptidase action on proteins including elastin, but rather limited hydrolysis of small-molecule substrates. Assays are conveniently made with hemoglobin, casein or Z-Phe-Arg-NHMec as substrate.. Prematurely activated/folded staphopain A is inhibited by staphostatin A (ScpB), which is probably required to protect staphylococcal cytoplasmic proteins from degradation by ScpA. Functionally, cysteine protease that plays an important role in the inhibition of host innate immune response. Cleaves host elastins found in connective tissues, pulmonary surfactant protein A in the lungs, and the chemokine receptor CXCR2 on leukocytes. Proteolytic cleavage of surfactant protein A impairs bacterial phagocytosis by neutrophils while CXCR2 degradation blocks neutrophil activation and chemotaxis. Additionally, promotes vascular leakage by activating the plasma kallikerin/kinin system, resulting in hypotension. In Staphylococcus aureus (strain Mu50 / ATCC 700699), this protein is Staphopain A (sspP).